The chain runs to 468 residues: Alpha-2A adrenergic receptor (468 aa).

Over 1-48 (MFRQEQPLAEGSFAPMGSLQPDAGNASWNGTEAPGGGARATPYSLQVT) the chain is Extracellular. N-linked (GlcNAc...) asparagine glycans are attached at residues N25 and N29. Residues 49–74 (LTLVCLAGLLMLFTVFGNVLVIIAVF) traverse the membrane as a helical segment. At 75–85 (TSRALKAPQNL) the chain is on the cytoplasmic side. The helical transmembrane segment at 86–111 (FLVSLASADILVATLVIPFSLANEVM) threads the bilayer. The Extracellular segment spans residues 112-121 (GYWYFGKAWC). A disulfide bridge links C121 with C203. A helical membrane pass occupies residues 122 to 144 (EIYLALDVLFCTSSIVHLCAISL). At 145 to 164 (DRYWSITQAIEYNLKRTPRR) the chain is on the cytoplasmic side. A helical membrane pass occupies residues 165 to 188 (IKAIIVTVWVISAVISFPPLISFE). The Extracellular segment spans residues 189 to 207 (KKRGRSGQPSAEPRCEIND). The chain crosses the membrane as a helical span at residues 208-232 (QKWYVISSSIGSFFAPCLIMILVYV). The Cytoplasmic portion of the chain corresponds to 233 to 392 (RIYQIAKRRT…RQNREKRFTF (160 aa)). Disordered regions lie at residues 242–279 (TRVPPSRRGPDATAAELPGSAERRPNGLGPERGGVGPV) and 291–381 (NGAP…SRWR). Residues 315–332 (SSEHAERPPGSRRSERGP) show a composition bias toward basic and acidic residues. At S348 the chain carries Phosphoserine. The segment covering 351–366 (RRGPGATGLGAPTAGP) has biased composition (low complexity). R370 carries the post-translational modification Omega-N-methylarginine. A helical transmembrane segment spans residues 393 to 417 (VLAVVIGVFVVCWFPFFFTYTLTAI). Topologically, residues 418–427 (GCPVPPTLFK) are extracellular. A helical membrane pass occupies residues 428-448 (FFFWFGYCNSSLNPVIYTIFN). Residues 449–468 (HDFRRAFKKILCRGDRKRIV) lie on the Cytoplasmic side of the membrane. Residue C460 is the site of S-palmitoyl cysteine attachment.

This sequence belongs to the G-protein coupled receptor 1 family. Adrenergic receptor subfamily. ADRA2A sub-subfamily. As to quaternary structure, component of the ADA2A-containing complex (ATAC), composed of KAT14, KAT2A, TADA2L, TADA3L, ZZ3, MBIP, WDR5, YEATS2, CCDC101 and DR1. Retina, brain and olfactory lobe.

The protein localises to the cell membrane. Its function is as follows. Alpha-2 adrenergic receptors mediate the catecholamine-induced inhibition of adenylate cyclase through the action of G proteins. Component of the ATAC complex, a complex with histone acetyltransferase activity on histones H3 and H4. The polypeptide is Alpha-2A adrenergic receptor (Bos taurus (Bovine)).